The sequence spans 363 residues: Pyrimidine monooxygenase RutA (363 aa).

FMN contacts are provided by residues 49-50 (IK), Asn-115, Glu-124, 140-141 (RY), and Ser-190.

It belongs to the NtaA/SnaA/DszA monooxygenase family. RutA subfamily.

The catalysed reaction is uracil + FMNH2 + NADH + O2 = (Z)-3-ureidoacrylate + FMN + NAD(+) + H2O + H(+). It catalyses the reaction thymine + FMNH2 + NADH + O2 = (Z)-2-methylureidoacrylate + FMN + NAD(+) + H2O + H(+). Functionally, catalyzes the pyrimidine ring opening between N-3 and C-4 by an unusual flavin hydroperoxide-catalyzed mechanism, adding oxygen atoms in the process to yield ureidoacrylate peracid, that immediately reacts with FMN forming ureidoacrylate and FMN-N(5)-oxide. The FMN-N(5)-oxide reacts spontaneously with NADH to produce FMN. Requires the flavin reductase RutF to regenerate FMN in vivo. The protein is Pyrimidine monooxygenase RutA of Klebsiella pneumoniae (strain 342).